A 199-amino-acid polypeptide reads, in one-letter code: Ribonuclease P protein subunit p25 (199 aa).

The span at 1–11 shows a compositional bias: basic and acidic residues; the sequence is MENFRKVRSEE. Disordered regions lie at residues 1 to 31 and 146 to 199; these read MENF…FADL and PRQL…DRTA. Phosphoserine is present on S172. Positions 190-199 are enriched in acidic residues; the sequence is PEAENEDRTA.

The protein belongs to the histone-like Alba family. In terms of assembly, component of nuclear RNase P and RNase MRP ribonucleoproteins. RNase P consists of a catalytic RNA moiety and 10 different protein chains; POP1, POP4, POP5, POP7, RPP14, RPP21, RPP25, RPP30, RPP38 and RPP40. Within the RNase P complex, POP1, POP7 and RPP25 form the 'finger' subcomplex, POP5, RPP14, RPP40 and homodimeric RPP30 form the 'palm' subcomplex, and RPP21, POP4 and RPP38 form the 'wrist' subcomplex. All subunits of the RNase P complex interact with the catalytic RNA. Several subunits of RNase P are also part of the RNase MRP complex. RNase MRP consists of a catalytic RNA moiety and about 8 protein subunits; POP1, POP7, RPP25, RPP30, RPP38, RPP40 and possibly also POP4 and POP5. POP7 forms a heterodimer with RPP25 that binds to the P3 stem loop of the catalytic RNA.

It localises to the nucleus. Its subcellular location is the nucleolus. Functionally, component of ribonuclease P, a ribonucleoprotein complex that generates mature tRNA molecules by cleaving their 5'-ends. Also a component of the MRP ribonuclease complex, which cleaves pre-rRNA sequences. In Mus musculus (Mouse), this protein is Ribonuclease P protein subunit p25 (Rpp25).